The following is a 389-amino-acid chain: Large ribosomal subunit protein uL3 (389 aa).

The tract at residues 1 to 36 is disordered; sequence MSHRKFEHPRHGSLGFLPRKRSSRHRGKVKSFPKDD. Residues 18 to 31 are compositionally biased toward basic residues; it reads PRKRSSRHRGKVKS.

Belongs to the universal ribosomal protein uL3 family.

The protein localises to the cytoplasm. Functionally, the L3 protein is a component of the large subunit of cytoplasmic ribosomes. This Oryza sativa subsp. japonica (Rice) protein is Large ribosomal subunit protein uL3 (RPL3).